The primary structure comprises 485 residues: MENRLRDTSRVVRSHAAPLNEVTQEDLKVERLHGRKYMNPSKKHVMREEFSDKIEHIMHDPRPQEGVHSELPVSISPLLCELAAPRQRIHFNPPETVVGIVTCGGICPGLNDVIRSLTLTAVNAYRVKRVIGFRFGYWGLSKKGSHTAMELYRTSVTSIHRYGGTILGSSRGPQDTSEMVDTLERLGVNILFTVGGDGTQRGALKIAEEAKRRGANLAVFGIPKTIDNDLSFSHRTFGFETAVDKAVEAVRAAYAEAISLNYGVGVVKLMGRDSGFIAAEAAVASAQANICLVPENPISEDIVMALIQRRFETSRSCVIIVAEGFGQDWEGGTGGHDASGNKKLTDIGVVLTKRIQAWLRKNKERYPNGTVKYIDPSYMIRACPPSANDALFCATLSTLAMHEAMAGATNCIIALRYNSYILVPIKVATSVRRVLDLRGQLWRQVREITVGLQDDVRAFKEAEVRRELEAISLVRERLIGQLSKL.

ATP is bound by residues Gly-105, 171 to 172 (RG), and 196 to 199 (GDGT). Residue Asp-197 coordinates Mg(2+). Residues 225–227 (TID), 270–272 (MGR), Glu-323, and 378–381 (YMIR) contribute to the substrate site. Asp-227 serves as the catalytic Proton acceptor. A Peroxisomal targeting signal motif is present at residues 483-485 (SKL).

This sequence belongs to the phosphofructokinase type A (PFKA) family. PPi-dependent PFK group II subfamily. Atypical ATP-dependent clade 'X' sub-subfamily. As to quaternary structure, homotetramer. The cofactor is Mg(2+).

It is found in the glycosome. The enzyme catalyses beta-D-fructose 6-phosphate + ATP = beta-D-fructose 1,6-bisphosphate + ADP + H(+). It participates in carbohydrate degradation; glycolysis; D-glyceraldehyde 3-phosphate and glycerone phosphate from D-glucose: step 3/4. Its activity is regulated as follows. Allosterically activated by AMP. Catalyzes the phosphorylation of D-fructose 6-phosphate to fructose 1,6-bisphosphate by ATP, the first committing step of glycolysis. In Trypanosoma cruzi (strain CL Brener), this protein is ATP-dependent 6-phosphofructokinase.